The chain runs to 320 residues: tRNA-cytidine(32) 2-sulfurtransferase (320 aa).

Positions 54–59 (SGGKDS) match the PP-loop motif motif. Positions 129, 132, and 220 each coordinate [4Fe-4S] cluster.

Belongs to the TtcA family. Homodimer. The cofactor is Mg(2+). It depends on [4Fe-4S] cluster as a cofactor.

The protein resides in the cytoplasm. The catalysed reaction is cytidine(32) in tRNA + S-sulfanyl-L-cysteinyl-[cysteine desulfurase] + AH2 + ATP = 2-thiocytidine(32) in tRNA + L-cysteinyl-[cysteine desulfurase] + A + AMP + diphosphate + H(+). It participates in tRNA modification. In terms of biological role, catalyzes the ATP-dependent 2-thiolation of cytidine in position 32 of tRNA, to form 2-thiocytidine (s(2)C32). The sulfur atoms are provided by the cysteine/cysteine desulfurase (IscS) system. The protein is tRNA-cytidine(32) 2-sulfurtransferase of Bordetella bronchiseptica (strain ATCC BAA-588 / NCTC 13252 / RB50) (Alcaligenes bronchisepticus).